We begin with the raw amino-acid sequence, 324 residues long: Lactonase drp35 (324 aa).

Residues Glu-47, Ser-109, Gly-111, Asp-129, Thr-132, Tyr-134, Asp-137, Asn-184, Asp-235, and Ser-236 each contribute to the Ca(2+) site. The Proton donor role is filled by Asp-235.

Belongs to the SMP-30/CGR1 family. It depends on Ca(2+) as a cofactor.

It localises to the cytoplasm. Functionally, exhibits lactonase activity. Acts in cells with perturbed membrane integrity and is possibly related to the membrane homeostasis. This Staphylococcus saprophyticus subsp. saprophyticus (strain ATCC 15305 / DSM 20229 / NCIMB 8711 / NCTC 7292 / S-41) protein is Lactonase drp35 (drp35).